We begin with the raw amino-acid sequence, 172 residues long: NADH-ubiquinone oxidoreductase chain 6 (172 aa).

5 consecutive transmembrane segments (helical) span residues 1–21 (MTYF…AVAS), 27–47 (YGVV…LSLG), 48–68 (VSFV…VVFV), 87–107 (VVGY…VGGF), and 138–158 (CGVG…FVVL).

Belongs to the complex I subunit 6 family.

It is found in the mitochondrion membrane. The catalysed reaction is a ubiquinone + NADH + 5 H(+)(in) = a ubiquinol + NAD(+) + 4 H(+)(out). Functionally, core subunit of the mitochondrial membrane respiratory chain NADH dehydrogenase (Complex I) that is believed to belong to the minimal assembly required for catalysis. Complex I functions in the transfer of electrons from NADH to the respiratory chain. The immediate electron acceptor for the enzyme is believed to be ubiquinone. The chain is NADH-ubiquinone oxidoreductase chain 6 (MT-ND6) from Uria lomvia (Thick-billed murre).